The sequence spans 420 residues: MRIKDVLFVKGSSGFYFDDQKAIKSGAVTDGFTYKGKPLTPGFSRVRQGGEAVSIMLFLENGEIAVGDCVAVQYSGVDGRDPVFLADNFIEVLEEEIKPRLVGYNLVRFREAARYFTNLTDKRGKRYHTALRYGLTQALLDAVAKINRTTMAEVIAEEYGLDLTLNPVPLFAQSGDDRYINADKMILKRVDVLPHGLFNHPAKTGEEGKNLTEYALWLKQRIKTLGDHDYLPVFHFDVYGTLGTVFNDNLDRIADYLARLEEKVAPHPLQIEGPVDLGSKERQIEGLKYLQEKLITLGSKVIIVADEWCNNLSDIKEFVDAGAGGMVQIKSPDLGGVNDIIEAVLYAKEKGTGAYLGGSCNETDVSAKITVHVGLATGPAQLLVKPGMGVDEGLTIMRNEMMRTLAILQRNKVTFQKKVG.

Glutamine 173 contributes to the (2S,3S)-3-methyl-L-aspartate binding site. Aspartate 237, glutamate 272, and aspartate 306 together coordinate Mg(2+). Residue glutamine 328 coordinates (2S,3S)-3-methyl-L-aspartate. Catalysis depends on lysine 330, which acts as the Proton acceptor. A (2S,3S)-3-methyl-L-aspartate-binding site is contributed by 359–360 (SC).

Homodimer. Mg(2+) is required as a cofactor.

It catalyses the reaction (2S,3S)-3-methyl-L-aspartate = mesaconate + NH4(+). It functions in the pathway amino-acid degradation; L-glutamate degradation via mesaconate pathway; acetate and pyruvate from L-glutamate: step 2/4. In terms of biological role, involved in the methylaspartate cycle. Catalyzes the formation of the alpha,beta-unsaturated bond by the reversible anti elimination of ammonia from L-threo-beta-methylaspartate (L-threo-(2S,3S)-3-methylaspartate) to give mesaconate. It can also catalyze the amination of fumarate and ethylfumarate, and the deamination of hydroxylamine, hydrazine, methylamine and ethylamine. The protein is Methylaspartate ammonia-lyase 1 of Carboxydothermus hydrogenoformans (strain ATCC BAA-161 / DSM 6008 / Z-2901).